The primary structure comprises 522 residues: Amine oxidase [flavin-containing] (522 aa).

The Cytoplasmic segment spans residues 1 to 492 (MTAQNTFDVI…FWERNLPSVG (492 aa)). Cys399 carries the post-translational modification S-8alpha-FAD cysteine. The helical; Anchor for type IV membrane protein transmembrane segment at 493–513 (GFINFLAASVLSVATAAGMLA) threads the bilayer. Topologically, residues 514 to 522 (YQKGLLTRS) are mitochondrial intermembrane.

Belongs to the flavin monoamine oxidase family. FAD serves as cofactor.

It localises to the mitochondrion outer membrane. The enzyme catalyses a secondary aliphatic amine + O2 + H2O = a primary amine + an aldehyde + H2O2. Catalyzes the oxidative deamination of biogenic and xenobiotic amines and has important functions in the metabolism of neuroactive and vasoactive amines in the central nervous system and peripheral tissues. Oxidizes both 5-hydroxytryptamine (5-HT) and beta-phenylethylamine (PEA). This Oncorhynchus mykiss (Rainbow trout) protein is Amine oxidase [flavin-containing] (mao).